The following is a 285-amino-acid chain: MIYPDEAMLYAPVEWHDCSEGFEDIRYEKSTDGIAKITINRPQVRNAFRPLTVKEMIQALADARYDDNIGVIILTGAGDKAFCSGGDQKVRGDYGGYKDDSGVHHLNVLDFQRQIRTCPKPVVAMVAGYSIGGGHVLHMMCDLTIAADNAIFGQTGPKVGSFDGGWGASYMARIVGQKKAREIWFLCRQYDAKQALDMGLVNTVVPLADLEKETVRWCREMLQNSPMALRCLKAALNADCDGQAGLQELAGNATMLFYMTEEGQEGRNAFNQKRQPDFSKFKRNP.

Substrate-binding positions include Arg-45, 84–89, Tyr-97, 129–133, Thr-155, Ser-161, Tyr-258, and Lys-273; these read SGGDQK and YSIGG. Position 154–156 (154–156) interacts with hydrogencarbonate; sequence QTG.

Belongs to the enoyl-CoA hydratase/isomerase family. MenB subfamily. In terms of assembly, homohexamer. Dimer of a homotrimer. Hydrogencarbonate is required as a cofactor.

It carries out the reaction 2-succinylbenzoyl-CoA + H(+) = 1,4-dihydroxy-2-naphthoyl-CoA + H2O. The protein operates within quinol/quinone metabolism; 1,4-dihydroxy-2-naphthoate biosynthesis; 1,4-dihydroxy-2-naphthoate from chorismate: step 6/7. It participates in quinol/quinone metabolism; menaquinone biosynthesis. With respect to regulation, inhibited by sulfite and nitrate. In terms of biological role, converts o-succinylbenzoyl-CoA (OSB-CoA) to 1,4-dihydroxy-2-naphthoyl-CoA (DHNA-CoA). The chain is 1,4-dihydroxy-2-naphthoyl-CoA synthase from Escherichia coli (strain K12).